The primary structure comprises 189 residues: Small ribosomal subunit protein uS5 (189 aa).

Residues 27-90 form the S5 DRBM domain; the sequence is FEERLLEAAR…EDAKKKTIRV (64 aa).

Belongs to the universal ribosomal protein uS5 family. Part of the 30S ribosomal subunit. Contacts proteins S4 and S8.

With S4 and S12 plays an important role in translational accuracy. Its function is as follows. Located at the back of the 30S subunit body where it stabilizes the conformation of the head with respect to the body. This Hydrogenobaculum sp. (strain Y04AAS1) protein is Small ribosomal subunit protein uS5.